A 463-amino-acid polypeptide reads, in one-letter code: Argininosuccinate lyase (463 aa).

It belongs to the lyase 1 family. Argininosuccinate lyase subfamily.

It localises to the cytoplasm. It carries out the reaction 2-(N(omega)-L-arginino)succinate = fumarate + L-arginine. Its pathway is amino-acid biosynthesis; L-arginine biosynthesis; L-arginine from L-ornithine and carbamoyl phosphate: step 3/3. This chain is Argininosuccinate lyase, found in Chlorobaculum parvum (strain DSM 263 / NCIMB 8327) (Chlorobium vibrioforme subsp. thiosulfatophilum).